Consider the following 345-residue polypeptide: S-adenosylmethionine:tRNA ribosyltransferase-isomerase (345 aa).

It belongs to the QueA family. As to quaternary structure, monomer.

It is found in the cytoplasm. It carries out the reaction 7-aminomethyl-7-carbaguanosine(34) in tRNA + S-adenosyl-L-methionine = epoxyqueuosine(34) in tRNA + adenine + L-methionine + 2 H(+). The protein operates within tRNA modification; tRNA-queuosine biosynthesis. In terms of biological role, transfers and isomerizes the ribose moiety from AdoMet to the 7-aminomethyl group of 7-deazaguanine (preQ1-tRNA) to give epoxyqueuosine (oQ-tRNA). The protein is S-adenosylmethionine:tRNA ribosyltransferase-isomerase of Shewanella pealeana (strain ATCC 700345 / ANG-SQ1).